A 957-amino-acid chain; its full sequence is Glycine dehydrogenase (decarboxylating) (957 aa).

N6-(pyridoxal phosphate)lysine is present on Lys708.

The protein belongs to the GcvP family. As to quaternary structure, the glycine cleavage system is composed of four proteins: P, T, L and H. It depends on pyridoxal 5'-phosphate as a cofactor.

It carries out the reaction N(6)-[(R)-lipoyl]-L-lysyl-[glycine-cleavage complex H protein] + glycine + H(+) = N(6)-[(R)-S(8)-aminomethyldihydrolipoyl]-L-lysyl-[glycine-cleavage complex H protein] + CO2. Its function is as follows. The glycine cleavage system catalyzes the degradation of glycine. The P protein binds the alpha-amino group of glycine through its pyridoxal phosphate cofactor; CO(2) is released and the remaining methylamine moiety is then transferred to the lipoamide cofactor of the H protein. This Escherichia coli (strain UTI89 / UPEC) protein is Glycine dehydrogenase (decarboxylating).